Consider the following 329-residue polypeptide: NADH-quinone oxidoreductase subunit H (329 aa).

The next 9 helical transmembrane spans lie at 9 to 29 (LIKI…ATYI), 42 to 62 (GPCY…IKLF), 75 to 95 (FIFT…MAPI), 117 to 137 (IGFL…ILAG), 154 to 174 (IQLL…LMVV), 188 to 208 (GGFL…FLIA), 238 to 258 (LKWG…SFVI), 269 to 291 (WGFI…LSMW), and 309 to 329 (WKIM…IILI).

This sequence belongs to the complex I subunit 1 family. NDH-1 is composed of 14 different subunits. Subunits NuoA, H, J, K, L, M, N constitute the membrane sector of the complex.

The protein resides in the cell inner membrane. It carries out the reaction a quinone + NADH + 5 H(+)(in) = a quinol + NAD(+) + 4 H(+)(out). Its function is as follows. NDH-1 shuttles electrons from NADH, via FMN and iron-sulfur (Fe-S) centers, to quinones in the respiratory chain. The immediate electron acceptor for the enzyme in this species is believed to be ubiquinone. Couples the redox reaction to proton translocation (for every two electrons transferred, four hydrogen ions are translocated across the cytoplasmic membrane), and thus conserves the redox energy in a proton gradient. This subunit may bind ubiquinone. The chain is NADH-quinone oxidoreductase subunit H from Helicobacter pylori (strain P12).